Consider the following 874-residue polypeptide: Probable inorganic carbon transporter subunit DabA (874 aa).

Zn(2+)-binding residues include C398, D400, H580, and C595.

The protein belongs to the inorganic carbon transporter (TC 9.A.2) DabA family. As to quaternary structure, forms a complex with DabB. Requires Zn(2+) as cofactor.

The protein resides in the cell membrane. In terms of biological role, part of an energy-coupled inorganic carbon pump. The sequence is that of Probable inorganic carbon transporter subunit DabA from Bacillus cereus (strain Q1).